Here is a 244-residue protein sequence, read N- to C-terminus: tRNA1(Val) (adenine(37)-N6)-methyltransferase (244 aa).

Belongs to the methyltransferase superfamily. tRNA (adenine-N(6)-)-methyltransferase family.

It localises to the cytoplasm. It carries out the reaction adenosine(37) in tRNA1(Val) + S-adenosyl-L-methionine = N(6)-methyladenosine(37) in tRNA1(Val) + S-adenosyl-L-homocysteine + H(+). Its function is as follows. Specifically methylates the adenine in position 37 of tRNA(1)(Val) (anticodon cmo5UAC). This Shewanella sediminis (strain HAW-EB3) protein is tRNA1(Val) (adenine(37)-N6)-methyltransferase.